Here is a 577-residue protein sequence, read N- to C-terminus: CDPK-related kinase 7 (577 aa).

Residues 1–38 (MGLCHGKPIEQQSKNLPISNEIEETPKNSSQKAKSSGF) are disordered. Gly2 is lipidated: N-myristoyl glycine. The Protein kinase domain occupies 124 to 386 (YEIDGEVGRG…AAQALCHPWL (263 aa)). Residues 130–138 (VGRGHFGYT) and Lys156 contribute to the ATP site. Asp252 acts as the Proton acceptor in catalysis. Ser292 is subject to Phosphoserine. Phosphoserine; by CPK1, CPK10 and CPK34 is present on Ser334. The autoinhibitory domain stretch occupies residues 391–421 (ELKIPSDMIIYKLVKVYIMSSSLRKSALAAL). Positions 410 to 430 (SSSLRKSALAALAKTLTVPQL) are calmodulin binding (CaMBD). EF-hand domains lie at 428–464 (PQLT…STEA), 465–500 (TKDS…VYQL), 501–540 (EAME…GPSV), and 543–572 (HVVL…VSSR). Residues Ser443, Asn445, Tyr447, Lys484, Glu489, Asp520, Asn522, Glu529, Asp554, and Lys556 each contribute to the Ca(2+) site. Residue Ser558 is modified to Phosphoserine.

This sequence belongs to the protein kinase superfamily. Ser/Thr protein kinase family. CDPK subfamily. Binds calmodulin (CaM) in a calcium-dependent manner. In terms of processing, autophosphorylated.

Its subcellular location is the membrane. The enzyme catalyses L-seryl-[protein] + ATP = O-phospho-L-seryl-[protein] + ADP + H(+). It catalyses the reaction L-threonyl-[protein] + ATP = O-phospho-L-threonyl-[protein] + ADP + H(+). With respect to regulation, activated by calcium and calmodulin. Autophosphorylation may play an important role in the regulation of the kinase activity. Functionally, may play a role in signal transduction pathways that involve calcium as a second messenger. In Arabidopsis thaliana (Mouse-ear cress), this protein is CDPK-related kinase 7 (CRK7).